The chain runs to 390 residues: Succinyl-diaminopimelate desuccinylase 1 (390 aa).

Histidine 76 provides a ligand contact to Zn(2+). Aspartate 78 is an active-site residue. Position 109 (aspartate 109) interacts with Zn(2+). The active-site Proton acceptor is the glutamate 143. Positions 144, 172, and 363 each coordinate Zn(2+).

Belongs to the peptidase M20A family. DapE subfamily. In terms of assembly, homodimer. Zn(2+) is required as a cofactor. Requires Co(2+) as cofactor.

It catalyses the reaction N-succinyl-(2S,6S)-2,6-diaminopimelate + H2O = (2S,6S)-2,6-diaminopimelate + succinate. It functions in the pathway amino-acid biosynthesis; L-lysine biosynthesis via DAP pathway; LL-2,6-diaminopimelate from (S)-tetrahydrodipicolinate (succinylase route): step 3/3. Catalyzes the hydrolysis of N-succinyl-L,L-diaminopimelic acid (SDAP), forming succinate and LL-2,6-diaminopimelate (DAP), an intermediate involved in the bacterial biosynthesis of lysine and meso-diaminopimelic acid, an essential component of bacterial cell walls. The protein is Succinyl-diaminopimelate desuccinylase 1 of Alteromonas mediterranea (strain DSM 17117 / CIP 110805 / LMG 28347 / Deep ecotype).